The primary structure comprises 583 residues: Torsin-1A-interacting protein 1 (583 aa).

Residues 1 to 339 (MAGERWRAEG…DESSVKIKWW (339 aa)) lie on the Nuclear side of the membrane. The disordered stretch occupies residues 23-208 (APIREGRRRL…PPLRSPRPDA (186 aa)). Position 60 is a phosphoserine (serine 60). Composition is skewed to basic and acidic residues over residues 70 to 101 (FEPR…EVRE) and 115 to 132 (GPQE…RLEQ). Phosphoserine occurs at positions 134, 142, 155, and 157. Over residues 166–188 (SSQPVTSQTVSKKTVRTPETSVM) the composition is skewed to polar residues. Serine 189 is subject to Phosphoserine. The residue at position 222 (threonine 222) is a Phosphothreonine. Serine 228, serine 231, and serine 242 each carry phosphoserine. Lysine 309 participates in a covalent cross-link: Glycyl lysine isopeptide (Lys-Gly) (interchain with G-Cter in SUMO2). A Phosphoserine modification is found at serine 316. The helical transmembrane segment at 340–360 (LLILVAALAMGIYWFFHTPVV) threads the bilayer. An interaction with TOR1A region spans residues 356–583 (HTPVVETTAV…ENALKAGSCL (228 aa)). Residues 360–388 (VETTAVQEFQNQMKQLQSKYQSQDEKLWK) are a coiled coil. At 361-583 (ETTAVQEFQN…ENALKAGSCL (223 aa)) the chain is on the perinuclear space side. Asparagine 399 carries N-linked (GlcNAc...) asparagine glycosylation.

It belongs to the TOR1AIP family. Interacts with ATP1B4. Interacts with TOR1A (ATP-bound). Interacts with TOR1B, TOR2A and TOR3A. Interacts with VIM.

The protein resides in the nucleus inner membrane. Functionally, required for nuclear membrane integrity. Induces TOR1A and TOR1B ATPase activity and is required for their location on the nuclear membrane. Binds to A- and B-type lamins. Possible role in membrane attachment and assembly of the nuclear lamina. The sequence is that of Torsin-1A-interacting protein 1 (Tor1aip1) from Rattus norvegicus (Rat).